Consider the following 343-residue polypeptide: UPF0283 membrane protein blr7254 (343 aa).

The next 3 membrane-spanning stretches (helical) occupy residues 64-84, 97-117, and 214-234; these read GALF…LGVV, LGFV…VVIG, and IVTA…VAAL.

It belongs to the UPF0283 family.

The protein localises to the cell inner membrane. The sequence is that of UPF0283 membrane protein blr7254 from Bradyrhizobium diazoefficiens (strain JCM 10833 / BCRC 13528 / IAM 13628 / NBRC 14792 / USDA 110).